The primary structure comprises 205 residues: Holliday junction branch migration complex subunit RuvA (205 aa).

A domain I region spans residues 1-64; it reads MIGRLRGTLA…EDAHLLYGFA (64 aa). Residues 65–143 are domain II; the sequence is EKRERELFRE…AWETSPAMFT (79 aa). The flexible linker stretch occupies residues 144–154; sequence LVSDGPLPVAS. The domain III stretch occupies residues 154-205; the sequence is SESSAEADAVSALVSLGYKPQEASKAIAAIKDKAGLSSEELIRRSLKGMIAK.

It belongs to the RuvA family. Homotetramer. Forms an RuvA(8)-RuvB(12)-Holliday junction (HJ) complex. HJ DNA is sandwiched between 2 RuvA tetramers; dsDNA enters through RuvA and exits via RuvB. An RuvB hexamer assembles on each DNA strand where it exits the tetramer. Each RuvB hexamer is contacted by two RuvA subunits (via domain III) on 2 adjacent RuvB subunits; this complex drives branch migration. In the full resolvosome a probable DNA-RuvA(4)-RuvB(12)-RuvC(2) complex forms which resolves the HJ.

It is found in the cytoplasm. Functionally, the RuvA-RuvB-RuvC complex processes Holliday junction (HJ) DNA during genetic recombination and DNA repair, while the RuvA-RuvB complex plays an important role in the rescue of blocked DNA replication forks via replication fork reversal (RFR). RuvA specifically binds to HJ cruciform DNA, conferring on it an open structure. The RuvB hexamer acts as an ATP-dependent pump, pulling dsDNA into and through the RuvAB complex. HJ branch migration allows RuvC to scan DNA until it finds its consensus sequence, where it cleaves and resolves the cruciform DNA. In Pseudomonas entomophila (strain L48), this protein is Holliday junction branch migration complex subunit RuvA.